Consider the following 249-residue polypeptide: 5'-nucleotidase SurE (249 aa).

The a divalent metal cation site is built by aspartate 8, aspartate 9, serine 39, and asparagine 91.

Belongs to the SurE nucleotidase family. A divalent metal cation is required as a cofactor.

It localises to the cytoplasm. It catalyses the reaction a ribonucleoside 5'-phosphate + H2O = a ribonucleoside + phosphate. Nucleotidase that shows phosphatase activity on nucleoside 5'-monophosphates. This is 5'-nucleotidase SurE from Pseudomonas fluorescens (strain Pf0-1).